Reading from the N-terminus, the 85-residue chain is Large ribosomal subunit protein bL27 (85 aa).

The segment at 1–22 (MAHKKGQGSTQNNRDSAGRRLG) is disordered.

It belongs to the bacterial ribosomal protein bL27 family.

This chain is Large ribosomal subunit protein bL27, found in Sulfurimonas denitrificans (strain ATCC 33889 / DSM 1251) (Thiomicrospira denitrificans (strain ATCC 33889 / DSM 1251)).